The sequence spans 93 residues: Large ribosomal subunit protein uL23cz/uL23cy (93 aa).

This sequence belongs to the universal ribosomal protein uL23 family. Part of the 50S ribosomal subunit.

It localises to the plastid. Its subcellular location is the chloroplast. Binds to 23S rRNA. In Oenothera elata subsp. hookeri (Hooker's evening primrose), this protein is Large ribosomal subunit protein uL23cz/uL23cy (rpl23-A).